Consider the following 101-residue polypeptide: MEPVDPRLEPWKHPGSQPKTASNNCYCKRCCLHCQVCFTKKGLGISYGRKKRRQRRRAPQDSKTHQVSLSKQPASQPRGDPTGPKESKKKVERETETDPED.

The segment covering 1-12 (MEPVDPRLEPWK) has biased composition (basic and acidic residues). Positions 1–24 (MEPVDPRLEPWKHPGSQPKTASNN) are disordered. Residues 1 to 24 (MEPVDPRLEPWKHPGSQPKTASNN) are interaction with human CREBBP. The tract at residues 1 to 48 (MEPVDPRLEPWKHPGSQPKTASNNCYCKRCCLHCQVCFTKKGLGISYG) is transactivation. A cysteine-rich region spans residues 22-37 (SNNCYCKRCCLHCQVC). Zn(2+) contacts are provided by C25 and C27. N6-acetyllysine; by host PCAF is present on K28. Zn(2+) is bound by residues C30, H33, C34, and C37. The tract at residues 38–48 (FTKKGLGISYG) is core. The tract at residues 45–101 (ISYGRKKRRQRRRAPQDSKTHQVSLSKQPASQPRGDPTGPKESKKKVERETETDPED) is disordered. The span at 48–57 (GRKKRRQRRR) shows a compositional bias: basic residues. Positions 49–57 (RKKRRQRRR) match the Nuclear localization signal, RNA-binding (TAR), and protein transduction motif. The tract at residues 49-86 (RKKRRQRRRAPQDSKTHQVSLSKQPASQPRGDPTGPKE) is interaction with the host capping enzyme RNGTT. Residues K50 and K51 each carry the N6-acetyllysine; by host EP300 and GCN5L2 modification. Asymmetric dimethylarginine; by host PRMT6 occurs at positions 52 and 53. The segment covering 65 to 75 (HQVSLSKQPAS) has biased composition (polar residues). Residue K71 forms a Glycyl lysine isopeptide (Lys-Gly) (interchain with G-Cter in ubiquitin) linkage. The short motif at 78–80 (RGD) is the Cell attachment site element. A compositionally biased stretch (basic and acidic residues) spans 83 to 101 (GPKESKKKVERETETDPED).

Belongs to the lentiviruses Tat family. In terms of assembly, interacts with host CCNT1. Associates with the P-TEFb complex composed at least of Tat, P-TEFb (CDK9 and CCNT1), TAR RNA, RNA Pol II. Recruits the HATs CREBBP, TAF1/TFIID, EP300, PCAF and GCN5L2. Interacts with host KAT5/Tip60; this interaction targets the latter to degradation. Interacts with the host deacetylase SIRT1. Interacts with host capping enzyme RNGTT; this interaction stimulates RNGTT. Binds to host KDR, and to the host integrins ITGAV/ITGB3 and ITGA5/ITGB1. Interacts with host KPNB1/importin beta-1 without previous binding to KPNA1/importin alpha-1. Interacts with EIF2AK2. Interacts with host nucleosome assembly protein NAP1L1; this interaction may be required for the transport of Tat within the nucleus, since the two proteins interact at the nuclear rim. Interacts with host C1QBP/SF2P32; this interaction involves lysine-acetylated Tat. Interacts with the host chemokine receptors CCR2, CCR3 and CXCR4. Interacts with host DPP4/CD26; this interaction may trigger an anti-proliferative effect. Interacts with host LDLR. Interacts with the host extracellular matrix metalloproteinase MMP1. Interacts with host PRMT6; this interaction mediates Tat's methylation. Interacts with, and is ubiquitinated by MDM2/Hdm2. Interacts with host PSMC3 and HTATIP2. Interacts with STAB1; this interaction may overcome SATB1-mediated repression of IL2 and IL2RA (interleukin) in T cells by binding to the same domain than HDAC1. Interacts (when acetylated) with human CDK13, thereby increasing HIV-1 mRNA splicing and promoting the production of the doubly spliced HIV-1 protein Nef. Interacts with host TBP; this interaction modulates the activity of transcriptional pre-initiation complex. Interacts with host RELA. Interacts with host PLSCR1; this interaction negatively regulates Tat transactivation activity by altering its subcellular distribution. Post-translationally, asymmetrical arginine methylation by host PRMT6 seems to diminish the transactivation capacity of Tat and affects the interaction with host CCNT1. Acetylation by EP300, CREBBP, GCN5L2/GCN5 and PCAF regulates the transactivation activity of Tat. EP300-mediated acetylation of Lys-50 promotes dissociation of Tat from the TAR RNA through the competitive binding to PCAF's bromodomain. In addition, the non-acetylated Tat's N-terminus can also interact with PCAF. PCAF-mediated acetylation of Lys-28 enhances Tat's binding to CCNT1. Lys-50 is deacetylated by SIRT1. In terms of processing, polyubiquitination by host MDM2 does not target Tat to degradation, but activates its transactivation function and fosters interaction with CCNT1 and TAR RNA. Post-translationally, phosphorylated by EIF2AK2 on serine and threonine residues adjacent to the basic region important for TAR RNA binding and function. Phosphorylation of Tat by EIF2AK2 is dependent on the prior activation of EIF2AK2 by dsRNA.

The protein resides in the host nucleus. It is found in the host nucleolus. It localises to the host cytoplasm. The protein localises to the secreted. In terms of biological role, transcriptional activator that increases RNA Pol II processivity, thereby increasing the level of full-length viral transcripts. Recognizes a hairpin structure at the 5'-LTR of the nascent viral mRNAs referred to as the transactivation responsive RNA element (TAR) and recruits the cyclin T1-CDK9 complex (P-TEFb complex) that will in turn hyperphosphorylate the RNA polymerase II to allow efficient elongation. The CDK9 component of P-TEFb and other Tat-activated kinases hyperphosphorylate the C-terminus of RNA Pol II that becomes stabilized and much more processive. Other factors such as HTATSF1/Tat-SF1, SUPT5H/SPT5, and HTATIP2 are also important for Tat's function. Besides its effect on RNA Pol II processivity, Tat induces chromatin remodeling of proviral genes by recruiting the histone acetyltransferases (HATs) CREBBP, EP300 and PCAF to the chromatin. This also contributes to the increase in proviral transcription rate, especially when the provirus integrates in transcriptionally silent region of the host genome. To ensure maximal activation of the LTR, Tat mediates nuclear translocation of NF-kappa-B by interacting with host RELA. Through its interaction with host TBP, Tat may also modulate transcription initiation. Tat can reactivate a latently infected cell by penetrating in it and transactivating its LTR promoter. In the cytoplasm, Tat is thought to act as a translational activator of HIV-1 mRNAs. Its function is as follows. Extracellular circulating Tat can be endocytosed by surrounding uninfected cells via the binding to several surface receptors such as CD26, CXCR4, heparan sulfate proteoglycans (HSPG) or LDLR. Neurons are rarely infected, but they internalize Tat via their LDLR. Through its interaction with nuclear HATs, Tat is potentially able to control the acetylation-dependent cellular gene expression. Modulates the expression of many cellular genes involved in cell survival, proliferation or in coding for cytokines or cytokine receptors. Tat plays a role in T-cell and neurons apoptosis. Tat induced neurotoxicity and apoptosis probably contribute to neuroAIDS. Circulating Tat also acts as a chemokine-like and/or growth factor-like molecule that binds to specific receptors on the surface of the cells, affecting many cellular pathways. In the vascular system, Tat binds to ITGAV/ITGB3 and ITGA5/ITGB1 integrins dimers at the surface of endothelial cells and competes with bFGF for heparin-binding sites, leading to an excess of soluble bFGF. This is Protein Tat from Homo sapiens (Human).